A 257-amino-acid chain; its full sequence is NAD-capped RNA hydrolase NudC (257 aa).

Arg-69 is a substrate binding site. Cys-98 and Cys-101 together coordinate Zn(2+). Glu-111 is a substrate binding site. Zn(2+) contacts are provided by Cys-116 and Cys-119. Position 124 (Tyr-124) interacts with substrate. Positions 125–248 (PQIAPCIIVA…TVARRLIEDT (124 aa)) constitute a Nudix hydrolase domain. Ala-158, Glu-174, and Glu-178 together coordinate a divalent metal cation. The short motif at 159-180 (GFVEVGETLEQAVAREVMEESG) is the Nudix box element. 192 to 199 (QPWPFPQS) is a substrate binding site. Glu-219 contributes to the a divalent metal cation binding site. Ala-241 contacts substrate.

It belongs to the Nudix hydrolase family. NudC subfamily. Homodimer. Requires Mg(2+) as cofactor. Mn(2+) is required as a cofactor. The cofactor is Zn(2+).

The enzyme catalyses a 5'-end NAD(+)-phospho-ribonucleoside in mRNA + H2O = a 5'-end phospho-adenosine-phospho-ribonucleoside in mRNA + beta-nicotinamide D-ribonucleotide + 2 H(+). It catalyses the reaction NAD(+) + H2O = beta-nicotinamide D-ribonucleotide + AMP + 2 H(+). It carries out the reaction NADH + H2O = reduced beta-nicotinamide D-ribonucleotide + AMP + 2 H(+). In terms of biological role, mRNA decapping enzyme that specifically removes the nicotinamide adenine dinucleotide (NAD) cap from a subset of mRNAs by hydrolyzing the diphosphate linkage to produce nicotinamide mononucleotide (NMN) and 5' monophosphate mRNA. The NAD-cap is present at the 5'-end of some mRNAs and stabilizes RNA against 5'-processing. Has preference for mRNAs with a 5'-end purine. Catalyzes the hydrolysis of a broad range of dinucleotide pyrophosphates. This is NAD-capped RNA hydrolase NudC from Klebsiella pneumoniae subsp. pneumoniae (strain ATCC 700721 / MGH 78578).